The chain runs to 173 residues: Xanthine-guanine phosphoribosyltransferase (173 aa).

5-phospho-alpha-D-ribose 1-diphosphate-binding positions include 48–49 and 107–115; these read RG and DDLVDTGKT. Asp-108 contributes to the Mg(2+) binding site. Residues Asp-111 and Ile-154 each coordinate guanine. Xanthine is bound by residues Asp-111 and Ile-154. GMP is bound by residues 111 to 115 and 153 to 154; these read DTGKT and WI.

It belongs to the purine/pyrimidine phosphoribosyltransferase family. XGPT subfamily. In terms of assembly, homotetramer. It depends on Mg(2+) as a cofactor.

Its subcellular location is the cell inner membrane. The catalysed reaction is GMP + diphosphate = guanine + 5-phospho-alpha-D-ribose 1-diphosphate. It carries out the reaction XMP + diphosphate = xanthine + 5-phospho-alpha-D-ribose 1-diphosphate. The enzyme catalyses IMP + diphosphate = hypoxanthine + 5-phospho-alpha-D-ribose 1-diphosphate. It functions in the pathway purine metabolism; GMP biosynthesis via salvage pathway; GMP from guanine: step 1/1. It participates in purine metabolism; XMP biosynthesis via salvage pathway; XMP from xanthine: step 1/1. Functionally, purine salvage pathway enzyme that catalyzes the transfer of the ribosyl-5-phosphate group from 5-phospho-alpha-D-ribose 1-diphosphate (PRPP) to the N9 position of the 6-oxopurines guanine and xanthine to form the corresponding ribonucleotides GMP (guanosine 5'-monophosphate) and XMP (xanthosine 5'-monophosphate), with the release of PPi. To a lesser extent, also acts on hypoxanthine. The protein is Xanthine-guanine phosphoribosyltransferase of Rhodopseudomonas palustris (strain ATCC BAA-98 / CGA009).